Consider the following 127-residue polypeptide: Large ribosomal subunit protein bL17 (127 aa).

The protein belongs to the bacterial ribosomal protein bL17 family. Part of the 50S ribosomal subunit. Contacts protein L32.

The polypeptide is Large ribosomal subunit protein bL17 (Aeromonas hydrophila subsp. hydrophila (strain ATCC 7966 / DSM 30187 / BCRC 13018 / CCUG 14551 / JCM 1027 / KCTC 2358 / NCIMB 9240 / NCTC 8049)).